We begin with the raw amino-acid sequence, 224 residues long: uncharacterized protein (224 aa).

In terms of domain architecture, HTH gntR-type spans 10-77 (TPYYLQFYNQ…DRNGFSITSL (68 aa)). Positions 37 to 56 (ETQLAKSFGVSRSPIREAMR) form a DNA-binding region, H-T-H motif.

This is an uncharacterized protein from Bacillus subtilis (strain 168).